The primary structure comprises 163 residues: Large ribosomal subunit protein bL19 (163 aa).

Positions 131–150 (ISQERKASGKDQASKPEVRP) are enriched in basic and acidic residues. The disordered stretch occupies residues 131–163 (ISQERKASGKDQASKPEVRPQGKKPAPKPKAKK). The segment covering 151-163 (QGKKPAPKPKAKK) has biased composition (basic residues).

Belongs to the bacterial ribosomal protein bL19 family.

This protein is located at the 30S-50S ribosomal subunit interface and may play a role in the structure and function of the aminoacyl-tRNA binding site. The polypeptide is Large ribosomal subunit protein bL19 (Rhodospirillum rubrum (strain ATCC 11170 / ATH 1.1.1 / DSM 467 / LMG 4362 / NCIMB 8255 / S1)).